The following is a 571-amino-acid chain: Proline--tRNA ligase 1 (571 aa).

Belongs to the class-II aminoacyl-tRNA synthetase family. ProS type 1 subfamily. As to quaternary structure, homodimer.

It localises to the cytoplasm. The enzyme catalyses tRNA(Pro) + L-proline + ATP = L-prolyl-tRNA(Pro) + AMP + diphosphate. Its function is as follows. Catalyzes the attachment of proline to tRNA(Pro) in a two-step reaction: proline is first activated by ATP to form Pro-AMP and then transferred to the acceptor end of tRNA(Pro). As ProRS can inadvertently accommodate and process non-cognate amino acids such as alanine and cysteine, to avoid such errors it has two additional distinct editing activities against alanine. One activity is designated as 'pretransfer' editing and involves the tRNA(Pro)-independent hydrolysis of activated Ala-AMP. The other activity is designated 'posttransfer' editing and involves deacylation of mischarged Ala-tRNA(Pro). The misacylated Cys-tRNA(Pro) is not edited by ProRS. This chain is Proline--tRNA ligase 1, found in Clostridioides difficile (strain 630) (Peptoclostridium difficile).